The sequence spans 66 residues: Prokaryotic ubiquitin-like protein Pup (66 aa).

The span at 1–10 shows a compositional bias: low complexity; that stretch reads MAGQEQQSSS. Residues 1-39 form a disordered region; that stretch reads MAGQEQQSSSPREEEHEVADAPVPVPSSPQASAHTDGVD. The tract at residues 23-60 is ARC ATPase binding; that stretch reads VPVPSSPQASAHTDGVDDLLDEIDGVLESNAEEFVRGF. At Q66 the chain carries Deamidated glutamine. Q66 is covalently cross-linked (Isoglutamyl lysine isopeptide (Gln-Lys) (interchain with K-? in acceptor proteins)).

It belongs to the prokaryotic ubiquitin-like protein family. In terms of assembly, strongly interacts with the proteasome-associated ATPase ARC through a hydrophobic interface; the interacting region of Pup lies in its C-terminal half. There is one Pup binding site per ARC hexamer ring. Is modified by deamidation of its C-terminal glutamine to glutamate by the deamidase Dop, a prerequisite to the subsequent pupylation process.

It functions in the pathway protein degradation; proteasomal Pup-dependent pathway. Its function is as follows. Protein modifier that is covalently attached to lysine residues of substrate proteins, thereby targeting them for proteasomal degradation. The tagging system is termed pupylation. The protein is Prokaryotic ubiquitin-like protein Pup of Renibacterium salmoninarum (strain ATCC 33209 / DSM 20767 / JCM 11484 / NBRC 15589 / NCIMB 2235).